Reading from the N-terminus, the 551-residue chain is uncharacterized protein (551 aa).

A compositionally biased stretch (polar residues) spans 1–11; sequence MRRVSLPNQLN. 2 disordered regions span residues 1–22 and 523–551; these read MRRV…TRGE and CDPT…QAFH. Basic and acidic residues predominate over residues 12 to 22; it reads ETRRRSPTRGE. The span at 537-551 shows a compositional bias: low complexity; that stretch reads QQPQQQQQQQQQAFH.

The protein to Synechocystis PCC 6803 sll0335 and to M.tuberculosis Rv2567.

This is an uncharacterized protein from Mycobacterium bovis (strain ATCC BAA-935 / AF2122/97).